Here is a 247-residue protein sequence, read N- to C-terminus: Disease resistance protein BAK6 (247 aa).

An N-terminal signal peptide occupies residues 1 to 24 (MAAVQFAAAGVLTGLLALATLASC). 3 N-linked (GlcNAc...) asparagine glycosylation sites follow: N66, N104, and N113. LRR repeat units follow at residues 90–114 (LESL…LGNL), 116–138 (DLIS…LGSI), 139–161 (STLR…SFGN), 162–186 (LTSL…LGNI), 188–210 (SLQF…VLSL), and 213–237 (VGNL…GLRV). 2 N-linked (GlcNAc...) asparagine glycosylation sites follow: N150 and N161. A glycan (N-linked (GlcNAc...) asparagine) is linked at N215.

Interacts with WAK17 isoform 1; the interaction is direct. In terms of assembly, (Microbial infection) Interacts with G.zeae CFEM1; the interaction is direct. Interacts with G.zeae CFEMN1; the interaction is direct. Interacts with G.zeae CFEM5; the interaction is direct.

Contributes to activation of the hypersensitive response, a form of programmed cell death, upon fungal infection. May sense the presence of fungal material and relay the signal to WAK17 isoform 1. The chain is Disease resistance protein BAK6 from Zea mays (Maize).